The following is a 349-amino-acid chain: tRNA pseudouridine synthase D (349 aa).

F27 serves as a coordination point for substrate. The active-site Nucleophile is the D80. N129 contacts substrate. Residues 155-303 form the TRUD domain; that stretch reads GVPNYFGAQR…VEAARRAMLL (149 aa). F329 contacts substrate.

This sequence belongs to the pseudouridine synthase TruD family.

It carries out the reaction uridine(13) in tRNA = pseudouridine(13) in tRNA. Functionally, responsible for synthesis of pseudouridine from uracil-13 in transfer RNAs. In Escherichia coli O7:K1 (strain IAI39 / ExPEC), this protein is tRNA pseudouridine synthase D.